Here is a 217-residue protein sequence, read N- to C-terminus: Octanoyltransferase (217 aa).

The BPL/LPL catalytic domain occupies 32-207 (SDSPDELWIV…TLSQLLGYQQ (176 aa)). Substrate contacts are provided by residues 71–78 (RGGQVTYH), 138–140 (SLG), and 151–153 (GLA). Catalysis depends on C169, which acts as the Acyl-thioester intermediate.

This sequence belongs to the LipB family.

It is found in the cytoplasm. The enzyme catalyses octanoyl-[ACP] + L-lysyl-[protein] = N(6)-octanoyl-L-lysyl-[protein] + holo-[ACP] + H(+). It functions in the pathway protein modification; protein lipoylation via endogenous pathway; protein N(6)-(lipoyl)lysine from octanoyl-[acyl-carrier-protein]: step 1/2. Its function is as follows. Catalyzes the transfer of endogenously produced octanoic acid from octanoyl-acyl-carrier-protein onto the lipoyl domains of lipoate-dependent enzymes. Lipoyl-ACP can also act as a substrate although octanoyl-ACP is likely to be the physiological substrate. In Shewanella sp. (strain MR-7), this protein is Octanoyltransferase.